Here is a 602-residue protein sequence, read N- to C-terminus: 4-hydroxy-3-methylbut-2-en-1-yl diphosphate synthase (flavodoxin) (602 aa).

Cys-508, Cys-511, Cys-543, and Glu-550 together coordinate [4Fe-4S] cluster.

It belongs to the IspG family. Requires [4Fe-4S] cluster as cofactor.

It catalyses the reaction (2E)-4-hydroxy-3-methylbut-2-enyl diphosphate + oxidized [flavodoxin] + H2O + 2 H(+) = 2-C-methyl-D-erythritol 2,4-cyclic diphosphate + reduced [flavodoxin]. It functions in the pathway isoprenoid biosynthesis; isopentenyl diphosphate biosynthesis via DXP pathway; isopentenyl diphosphate from 1-deoxy-D-xylulose 5-phosphate: step 5/6. Converts 2C-methyl-D-erythritol 2,4-cyclodiphosphate (ME-2,4cPP) into 1-hydroxy-2-methyl-2-(E)-butenyl 4-diphosphate. The sequence is that of 4-hydroxy-3-methylbut-2-en-1-yl diphosphate synthase (flavodoxin) from Chlamydia trachomatis serovar L2 (strain ATCC VR-902B / DSM 19102 / 434/Bu).